Reading from the N-terminus, the 597-residue chain is (E)-sabinene hydrate synthase, chloroplastic (597 aa).

The N-terminal 47 residues, 1–47 (MSTISINHVGILRNPLQCKNKRTSINKPWSLSLPRSSPASRLVKPCR), are a transit peptide targeting the chloroplast. Residues D353 and D357 each contribute to the Mn(2+) site. The DDXXD motif motif lies at 353–357 (DDVYD). 2 homodimerization regions span residues 359 to 365 (YGTLDEL) and 431 to 468 (EAGW…VSLP). Residues D495 and E503 each coordinate Mn(2+).

The protein belongs to the terpene synthase family. As to quaternary structure, homodimer. The cofactor is Mn(2+). Requires Mg(2+) as cofactor.

The protein localises to the plastid. Its subcellular location is the chloroplast. It catalyses the reaction (2E)-geranyl diphosphate + H2O = sabinene hydrate + diphosphate. Its pathway is secondary metabolite biosynthesis; terpenoid biosynthesis. Involved in the biosynthesis of phenolic monoterpenes natural products. Monoterpene synthase which catalyzes the conversion of geranyl diphosphate (GPP) to sabinene hydrate, specifically (E)-sabinene hydrate, and the formation of minor amounts and traces of several other monoterpenes (e.g. mainly alpha-pinene, limonene and alpha-terpineol). The polypeptide is (E)-sabinene hydrate synthase, chloroplastic (Thymus vulgaris (Thyme)).